We begin with the raw amino-acid sequence, 235 residues long: Calcium-activated potassium channel subunit beta-2 (235 aa).

The interval 1 to 45 is ball and chain; the sequence is MFIWTSGRTSSSYRHDEKRNIYQKIRDHDLLDKRKTVTALKAGED. Residues 1–46 lie on the Cytoplasmic side of the membrane; sequence MFIWTSGRTSSSYRHDEKRNIYQKIRDHDLLDKRKTVTALKAGEDR. A helical transmembrane segment spans residues 47-67; sequence AILLGLAMMVCSIMMYFLLGI. The Extracellular segment spans residues 68–194; that stretch reads TLLRSYMQSV…VILTKLYSSN (127 aa). Residues Asn-88, Asn-96, and Asn-119 are each glycosylated (N-linked (GlcNAc...) asparagine). Residues 195-215 form a helical membrane-spanning segment; that stretch reads VLFHSLFWPTCMMAGGVAIVA. The Cytoplasmic segment spans residues 216-235; it reads MVKLTQYLSLLCERIQRINR.

It belongs to the KCNMB (TC 8.A.14.1) family. KCNMB2 subfamily. In terms of assembly, interacts with KCNMA1 tetramer. There are probably 4 molecules of KCMNB2 per KCNMA1 tetramer. N-glycosylated. In terms of tissue distribution, highly expressed in brain and heart. Also expressed in lung.

The protein localises to the membrane. Its function is as follows. Regulatory subunit of the calcium activated potassium KCNMA1 (maxiK) channel. Modulates the calcium sensitivity and gating kinetics of KCNMA1, thereby contributing to KCNMA1 channel diversity. Acts as a negative regulator that confers rapid and complete inactivation of KCNMA1 channel complex. This is Calcium-activated potassium channel subunit beta-2 (Kcnmb2) from Rattus norvegicus (Rat).